The sequence spans 141 residues: SsrA-binding protein (141 aa).

This sequence belongs to the SmpB family.

Its subcellular location is the cytoplasm. In terms of biological role, required for rescue of stalled ribosomes mediated by trans-translation. Binds to transfer-messenger RNA (tmRNA), required for stable association of tmRNA with ribosomes. tmRNA and SmpB together mimic tRNA shape, replacing the anticodon stem-loop with SmpB. tmRNA is encoded by the ssrA gene; the 2 termini fold to resemble tRNA(Ala) and it encodes a 'tag peptide', a short internal open reading frame. During trans-translation Ala-aminoacylated tmRNA acts like a tRNA, entering the A-site of stalled ribosomes, displacing the stalled mRNA. The ribosome then switches to translate the ORF on the tmRNA; the nascent peptide is terminated with the 'tag peptide' encoded by the tmRNA and targeted for degradation. The ribosome is freed to recommence translation, which seems to be the essential function of trans-translation. The sequence is that of SsrA-binding protein from Ureaplasma parvum serovar 3 (strain ATCC 27815 / 27 / NCTC 11736).